The sequence spans 153 residues: Cytochrome c-type biogenesis protein CcmE (153 aa).

The Cytoplasmic segment spans residues 1–8 (MTPVQRRR). Residues 9–29 (LVWVLLALLASGLATALVAMA) form a helical; Signal-anchor for type II membrane protein membrane-spanning segment. At 30-153 (LERNIAYLYT…DVPVTAPEVR (124 aa)) the chain is on the periplasmic side. His-123 and Tyr-127 together coordinate heme.

Belongs to the CcmE/CycJ family.

It localises to the cell inner membrane. Its function is as follows. Heme chaperone required for the biogenesis of c-type cytochromes. Transiently binds heme delivered by CcmC and transfers the heme to apo-cytochromes in a process facilitated by CcmF and CcmH. The polypeptide is Cytochrome c-type biogenesis protein CcmE (Stenotrophomonas maltophilia (strain R551-3)).